The chain runs to 708 residues: Ribosomal RNA large subunit methyltransferase K/L (708 aa).

The region spanning 43–154 is the THUMP domain; it reads QGYQITLWTR…RGKITIGINF (112 aa).

The protein belongs to the methyltransferase superfamily. RlmKL family.

Its subcellular location is the cytoplasm. It carries out the reaction guanosine(2445) in 23S rRNA + S-adenosyl-L-methionine = N(2)-methylguanosine(2445) in 23S rRNA + S-adenosyl-L-homocysteine + H(+). It catalyses the reaction guanosine(2069) in 23S rRNA + S-adenosyl-L-methionine = N(2)-methylguanosine(2069) in 23S rRNA + S-adenosyl-L-homocysteine + H(+). Its function is as follows. Specifically methylates the guanine in position 2445 (m2G2445) and the guanine in position 2069 (m7G2069) of 23S rRNA. In Shewanella amazonensis (strain ATCC BAA-1098 / SB2B), this protein is Ribosomal RNA large subunit methyltransferase K/L.